The primary structure comprises 569 residues: Mitogen-activated protein kinase 7 (569 aa).

The 292-residue stretch at Y13 to F304 folds into the Protein kinase domain. Residues V19 to V27 and K42 each bind ATP. D139 (proton acceptor) is an active-site residue. At T175 the chain carries Phosphothreonine. Positions T175 to Y177 match the TXY motif. Position 177 is a phosphotyrosine (Y177). The disordered stretch occupies residues T401–V420.

The protein belongs to the protein kinase superfamily. CMGC Ser/Thr protein kinase family. MAP kinase subfamily. Post-translationally, dually phosphorylated on Thr-175 and Tyr-177, which activates the enzyme.

It catalyses the reaction L-seryl-[protein] + ATP = O-phospho-L-seryl-[protein] + ADP + H(+). The catalysed reaction is L-threonyl-[protein] + ATP = O-phospho-L-threonyl-[protein] + ADP + H(+). With respect to regulation, activated by threonine and tyrosine phosphorylation. The polypeptide is Mitogen-activated protein kinase 7 (MPK7) (Oryza sativa subsp. japonica (Rice)).